A 402-amino-acid chain; its full sequence is Putative cytochrome P450 133B1 (402 aa).

Cys-348 contributes to the heme binding site.

The protein belongs to the cytochrome P450 family. Heme is required as a cofactor.

In Xylella fastidiosa (strain 9a5c), this protein is Putative cytochrome P450 133B1 (cyp133B1).